The sequence spans 611 residues: Probable cysteine desulfurase 1 (611 aa).

Positions 1–208 are cargo-loading domain; it reads MRATQLYAAS…HEMVDVFDIQ (208 aa). Position 428 is an N6-(pyridoxal phosphate)lysine (lysine 428). Cysteine 566 acts as the Cysteine persulfide intermediate in catalysis.

This sequence belongs to the class-V pyridoxal-phosphate-dependent aminotransferase family. Csd subfamily. In terms of assembly, there are 1-2 copies of this protein in each type 2A encapsulin shell. Pyridoxal 5'-phosphate serves as cofactor.

It localises to the encapsulin nanocompartment. It catalyses the reaction (sulfur carrier)-H + L-cysteine = (sulfur carrier)-SH + L-alanine. In terms of biological role, cargo protein of a type 2A encapsulin nanocompartment involved in sulfur metabolism. Cysteine desulfurases mobilize the sulfur from L-cysteine to yield L-alanine, an essential step in sulfur metabolism for biosynthesis of a variety of sulfur-containing biomolecules. The protein is Probable cysteine desulfurase 1 of Mycobacterium leprae (strain TN).